Consider the following 267-residue polypeptide: tRNA pseudouridine synthase A (267 aa).

The active-site Nucleophile is Asp-54. Substrate is bound at residue Tyr-112.

The protein belongs to the tRNA pseudouridine synthase TruA family. As to quaternary structure, homodimer.

The catalysed reaction is uridine(38/39/40) in tRNA = pseudouridine(38/39/40) in tRNA. Functionally, formation of pseudouridine at positions 38, 39 and 40 in the anticodon stem and loop of transfer RNAs. The chain is tRNA pseudouridine synthase A from Bordetella avium (strain 197N).